The primary structure comprises 741 residues: T-box transcription factor TBX3 (741 aa).

A DNA-binding region (T-box; first part) is located at residues L107 to T220. Positions I241 to D305 form a DNA-binding region, T-box; second part. A Phosphoserine modification is found at S369. Positions S369–E469 are disordered. Composition is skewed to basic and acidic residues over residues A377 to E386 and S420 to H437. A phosphoserine mark is found at S432, S438, S456, S705, S736, S738, and S740. Residues S438–R447 show a composition bias toward polar residues.

As to quaternary structure, interacts with PML. As to expression, in adults, highest levels in lung. Also found in brain, heart, kidney, liver and ovary.

The protein localises to the nucleus. Its function is as follows. Transcriptional repressor involved in developmental processes. Binds to the palindromic T site 5'-TTCACACCTAGGTGTGAA-3' DNA sequence, or a half-site, which are present in the regulatory region of several genes. Probably plays a role in limb pattern formation. Required for mammary placode induction, and maintenance of the mammary buds during development. Involved in branching morphogenesis in both developing lungs and adult mammary glands, via negative modulation of target genes; acting redundantly with TBX2. Required, together with TBX2, to maintain cell proliferation in the embryonic lung mesenchyme; perhaps acting downstream of SHH, BMP and TGFbeta signaling. Involved in modulating early inner ear development, acting independently of, and also redundantly with, TBX2 in different subregions of the developing ear. Acts as a negative regulator of PML function in cellular senescence. This chain is T-box transcription factor TBX3 (Tbx3), found in Mus musculus (Mouse).